Consider the following 260-residue polypeptide: Global transcriptional regulator CodY (260 aa).

A GAF domain region spans residues 1–159 (MPNLLEKTRK…SSTVVGIQLL (159 aa)). The segment at residues 207–226 (ASVIADRIGITRSVIVNALR) is a DNA-binding region (H-T-H motif).

This sequence belongs to the CodY family.

Its subcellular location is the cytoplasm. Functionally, DNA-binding global transcriptional regulator which is involved in the adaptive response to starvation and acts by directly or indirectly controlling the expression of numerous genes in response to nutrient availability. During rapid exponential growth, CodY is highly active and represses genes whose products allow adaptation to nutrient depletion. The chain is Global transcriptional regulator CodY from Streptococcus uberis (strain ATCC BAA-854 / 0140J).